We begin with the raw amino-acid sequence, 310 residues long: 2-dehydro-3-deoxygluconokinase (310 aa).

Substrate contacts are provided by residues 29–33 (GDTLN), Tyr89, 103–105 (YWR), and Arg171. Residues 169 to 171 (NYR), 229 to 234 (KRGADA), and 262 to 265 (AAGD) each bind ATP. Substrate is bound at residue Asp265. Asp265 (proton acceptor) is an active-site residue.

The protein belongs to the carbohydrate kinase PfkB family.

It carries out the reaction 2-dehydro-3-deoxy-D-gluconate + ATP = 2-dehydro-3-deoxy-6-phospho-D-gluconate + ADP + H(+). It functions in the pathway carbohydrate acid metabolism; 2-dehydro-3-deoxy-D-gluconate degradation; D-glyceraldehyde 3-phosphate and pyruvate from 2-dehydro-3-deoxy-D-gluconate: step 1/2. Catalyzes the phosphorylation of 2-keto-3-deoxygluconate (KDG) to produce 2-keto-3-deoxy-6-phosphogluconate (KDPG). This Dickeya dadantii (strain 3937) (Erwinia chrysanthemi (strain 3937)) protein is 2-dehydro-3-deoxygluconokinase.